Reading from the N-terminus, the 240-residue chain is Uridylate kinase (240 aa).

Position 13–16 (13–16 (KASG)) interacts with ATP. Residues 21–26 (GAQGFG) are involved in allosteric activation by GTP. G55 serves as a coordination point for UMP. G56 and R60 together coordinate ATP. UMP contacts are provided by residues D75 and 136–143 (TGNPFFTT). T163, Q164, Y169, and D172 together coordinate ATP.

The protein belongs to the UMP kinase family. As to quaternary structure, homohexamer.

The protein localises to the cytoplasm. It catalyses the reaction UMP + ATP = UDP + ADP. It functions in the pathway pyrimidine metabolism; CTP biosynthesis via de novo pathway; UDP from UMP (UMPK route): step 1/1. With respect to regulation, allosterically activated by GTP. Inhibited by UTP. Functionally, catalyzes the reversible phosphorylation of UMP to UDP. The protein is Uridylate kinase of Rhizobium etli (strain ATCC 51251 / DSM 11541 / JCM 21823 / NBRC 15573 / CFN 42).